Reading from the N-terminus, the 456-residue chain is MALWGGRFQGQASALFQLFNDSLPVDYRLFVQDVEGSIAWADAIASVGILNADECSRLKAALTELLEEVGEDESAIIGSGAEDIHSFVETKLIEKVGDLGKKLHTGRSRNDQVATDLKLWCKASGGLLETKLTAVIQALLALASRELDAVMPGYTHLQRAQPVTFGHWCLAYVEMLERDLSRLADALKRLNTCPLGSGALAGTAYAIDRHELAAALGFGGPTLNSLDSVSDRDHVVELCAAASVSMMHLSRMAEDLIFFNTGEAAFVELADNVTSGSSLMPQKKNPDALELIRGKTGRVYGNLVGILTTMKALPLAYNKDMQEDKEGLFDTLDSWGICLDMAALVLEGVKVNRDNTKQAAQAGYANATELADYLVAKGMPFREAHHVVGEVVLHAISKGQALEALPLASLQSFAAVIGDDVYPHLSLDECLAKRDVLGGTAIKQVTAALAAKQQQY.

It belongs to the lyase 1 family. Argininosuccinate lyase subfamily.

Its subcellular location is the cytoplasm. The enzyme catalyses 2-(N(omega)-L-arginino)succinate = fumarate + L-arginine. The protein operates within amino-acid biosynthesis; L-arginine biosynthesis; L-arginine from L-ornithine and carbamoyl phosphate: step 3/3. This chain is Argininosuccinate lyase, found in Shewanella amazonensis (strain ATCC BAA-1098 / SB2B).